Here is a 343-residue protein sequence, read N- to C-terminus: Serpentine receptor class alpha-11 (343 aa).

Over M1–T24 the chain is Extracellular. The helical transmembrane segment at C25 to I45 threads the bilayer. Residues R46 to M60 lie on the Cytoplasmic side of the membrane. The chain crosses the membrane as a helical span at residues F61–V81. Residues Q82–Y106 are Extracellular-facing. A helical membrane pass occupies residues V107–I127. Residues D128–P146 lie on the Cytoplasmic side of the membrane. The chain crosses the membrane as a helical span at residues G147–W167. Topologically, residues N168 to F192 are extracellular. A helical transmembrane segment spans residues L193 to I213. Over N214–S247 the chain is Cytoplasmic. Residues T248–F268 form a helical membrane-spanning segment. Residues T269–T291 lie on the Extracellular side of the membrane. A helical transmembrane segment spans residues Y292–I312. The Cytoplasmic portion of the chain corresponds to R313 to K343.

It belongs to the nematode receptor-like protein sra family.

The protein resides in the membrane. Functionally, a G protein-coupled receptor required for olfactory imprinting a requisite in ordorant response such as benzaldehyde and isoamylalcohol. In Caenorhabditis briggsae, this protein is Serpentine receptor class alpha-11.